Reading from the N-terminus, the 426-residue chain is Transcription termination factor Rho (426 aa).

Residues 58-131 (QSLARGYLDI…VRVEAVNGLD (74 aa)) enclose the Rho RNA-BD domain. ATP-binding positions include 176–181 (GRGQRA), 188–193 (KAGKTT), and Arg219.

This sequence belongs to the Rho family. Homohexamer. The homohexamer assembles into an open ring structure.

In terms of biological role, facilitates transcription termination by a mechanism that involves Rho binding to the nascent RNA, activation of Rho's RNA-dependent ATPase activity, and release of the mRNA from the DNA template. The polypeptide is Transcription termination factor Rho (Deinococcus radiodurans (strain ATCC 13939 / DSM 20539 / JCM 16871 / CCUG 27074 / LMG 4051 / NBRC 15346 / NCIMB 9279 / VKM B-1422 / R1)).